The primary structure comprises 1064 residues: Lysine-specific demethylase 4A (1064 aa).

At Ala-2 the chain carries N-acetylalanine. The JmjN domain maps to 14-56 (IMTFYPTMEEFRNFSRYIAYIESQGAHRAGLAKVVPPKEWKPR). Residue Tyr-132 coordinates 2-oxoglutarate. One can recognise a JmjC domain in the interval 142 to 308 (EKHVDEWNIG…YGKQAVLCSC (167 aa)). Residues His-188 and Glu-190 each contribute to the Fe cation site. The 2-oxoglutarate site is built by Asn-198 and Lys-206. The Zn(2+) site is built by Cys-234 and His-240. 2-oxoglutarate is bound at residue Lys-241. His-276 contacts Fe cation. The Zn(2+) site is built by Cys-306 and Cys-308. Disordered stretches follow at residues 358-384 (ELPP…EEGD), 501-537 (FSGS…RAQG), and 616-642 (SDDE…PLSQ). Over residues 366–382 (EEECPEDDMEGVEDGEE) the composition is skewed to acidic residues. Residues 509–532 (SSSLGSGSSRDSVSSDSETSEPLS) are compositionally biased toward low complexity. Ser-523 is subject to Phosphoserine. The interaction with NCOR1 stretch occupies residues 597 to 638 (RQPLSKLPRHHPLVLQECVSDDETSEQLTPEEEAEETEAWAK). Residues 616-634 (SDDETSEQLTPEEEAEETE) are compositionally biased toward acidic residues. The PHD-type 1 zinc-finger motif lies at 709-767 (MCFTSTGCGTDINLSTPYLEEDGTSILVSCKKCSVRVHASCYGVPPAKASEDWMCSRCS). A C2HC pre-PHD-type zinc finger spans residues 772–805 (EEDCCLCSLRGGALQRANDDRWVHVSCAVAILEA). A PHD-type 2 zinc finger spans residues 828-885 (LKCIFCKKRRKRTAGCCVQCSHGRCPTAFHVSCAQAAGVMMQPDDWPFVVFITCFRHK). Tudor domains lie at 897–954 (QSIT…CLQF) and 955–1011 (GPPA…EELP).

It belongs to the JHDM3 histone demethylase family. Interacts with histone deacetylase proteins HDAC1, HDAC2 and HDAC3. Interacts with RB and NCOR1. Interacts with VRK1. Fe(2+) is required as a cofactor. Post-translationally, ubiquitinated by RNF8 and RNF168, leading to its degradation. Degradation promotes accessibility of H4K20me2 mark for DNA repair protein TP53BP1, which is then recruited. Also ubiquitinated by the SCF(FBXO22) complex; leading to proteasomal degradation.

Its subcellular location is the nucleus. The catalysed reaction is N(6),N(6),N(6)-trimethyl-L-lysyl(9)-[histone H3] + 2 2-oxoglutarate + 2 O2 = N(6)-methyl-L-lysyl(9)-[histone H3] + 2 formaldehyde + 2 succinate + 2 CO2. The enzyme catalyses N(6),N(6),N(6)-trimethyl-L-lysyl(36)-[histone H3] + 2 2-oxoglutarate + 2 O2 = N(6)-methyl-L-lysyl(36)-[histone H3] + 2 formaldehyde + 2 succinate + 2 CO2. In terms of biological role, histone demethylase that specifically demethylates 'Lys-9' and 'Lys-36' residues of histone H3, thereby playing a central role in histone code. Does not demethylate histone H3 'Lys-4', H3 'Lys-27' nor H4 'Lys-20'. Demethylates trimethylated H3 'Lys-9' and H3 'Lys-36' residue, while it has no activity on mono- and dimethylated residues. Demethylation of Lys residue generates formaldehyde and succinate. Participates in transcriptional repression of ASCL2 and E2F-responsive promoters via the recruitment of histone deacetylases and NCOR1, respectively. The sequence is that of Lysine-specific demethylase 4A (KDM4A) from Pongo abelii (Sumatran orangutan).